A 423-amino-acid polypeptide reads, in one-letter code: UPF0229 protein VP0986 (423 aa).

The tract at residues 69–112 (GGVRERVHPGNDQFITGDKIERPKGGGQGSGSGEGNASPDGEGQ) is disordered. Residues 93–102 (GGGQGSGSGE) are compositionally biased toward gly residues.

This sequence belongs to the UPF0229 family.

The protein is UPF0229 protein VP0986 of Vibrio parahaemolyticus serotype O3:K6 (strain RIMD 2210633).